We begin with the raw amino-acid sequence, 317 residues long: Secreted frizzled-related protein 5 (317 aa).

An N-terminal signal peptide occupies residues 1 to 29 (MRAAAAGGGVRTAALALLLGALHWAPARC). The FZ domain maps to 48–165 (SKPPQCLDIP…PLDNDLCIAV (118 aa)). 8 disulfides stabilise this stretch: Cys53-Cys116, Cys63-Cys109, Cys100-Cys135, Cys124-Cys162, Cys128-Cys152, Cys181-Cys253, Cys184-Cys255, and Cys198-Cys303. In terms of domain architecture, NTR spans 181 to 303 (CAQCEMEHSA…AVKFMFSYPC (123 aa)).

The protein belongs to the secreted frizzled-related protein (sFRP) family. In terms of tissue distribution, highly expressed in the retinal pigment epithelium (RPE) and pancreas. Weak expression in heart, liver and muscle.

The protein resides in the secreted. Its function is as follows. Soluble frizzled-related proteins (sFRPS) function as modulators of Wnt signaling through direct interaction with Wnts. They have a role in regulating cell growth and differentiation in specific cell types. SFRP5 may be involved in determining the polarity of photoreceptor, and perhaps, other cells in the retina. The chain is Secreted frizzled-related protein 5 (SFRP5) from Homo sapiens (Human).